Reading from the N-terminus, the 687-residue chain is Glycine--tRNA ligase beta subunit (687 aa).

This sequence belongs to the class-II aminoacyl-tRNA synthetase family. Tetramer of two alpha and two beta subunits.

The protein localises to the cytoplasm. It catalyses the reaction tRNA(Gly) + glycine + ATP = glycyl-tRNA(Gly) + AMP + diphosphate. This chain is Glycine--tRNA ligase beta subunit, found in Neisseria meningitidis serogroup A / serotype 4A (strain DSM 15465 / Z2491).